The primary structure comprises 85 residues: U4-theraphotoxin-Hhn1w (85 aa).

Residues 1–22 (MKVTLIAILTCAAVLALHTTAA) form the signal peptide. The propeptide occupies 23–48 (EELEAESQLMEVGMPDTELAAVDEER). 3 disulfide bridges follow: Cys52–Cys66, Cys56–Cys77, and Cys71–Cys82.

It belongs to the neurotoxin 12 (Hwtx-2) family. 02 (Hwtx-2) subfamily. In terms of tissue distribution, expressed by the venom gland.

It localises to the secreted. Its function is as follows. Postsynaptic neurotoxin. The sequence is that of U4-theraphotoxin-Hhn1w from Cyriopagopus hainanus (Chinese bird spider).